Here is a 975-residue protein sequence, read N- to C-terminus: Translation initiation factor IF-2 (975 aa).

The span at Asp48–Lys63 shows a compositional bias: basic and acidic residues. Disordered stretches follow at residues Asp48–Arg84 and Lys98–Thr388. A compositionally biased stretch (low complexity) spans Glu104 to Asp115. A compositionally biased stretch (basic and acidic residues) spans Ala120–Ala177. Positions Lys178–Gln211 are enriched in low complexity. Residues Asp212–Arg263 show a composition bias toward basic and acidic residues. Low complexity predominate over residues Lys302 to Gly330. A compositionally biased stretch (gly residues) spans Ser359–Lys372. In terms of domain architecture, tr-type G spans Pro475–Lys644. Residues Gly484–Thr491 are G1. A GTP-binding site is contributed by Gly484–Thr491. A G2 region spans residues Gly509–His513. Positions Asp530–Gly533 are G3. Residues Asp530–His534 and Asn584–Asp587 contribute to the GTP site. The G4 stretch occupies residues Asn584–Asp587. The interval Ser620–Lys622 is G5.

It belongs to the TRAFAC class translation factor GTPase superfamily. Classic translation factor GTPase family. IF-2 subfamily.

Its subcellular location is the cytoplasm. In terms of biological role, one of the essential components for the initiation of protein synthesis. Protects formylmethionyl-tRNA from spontaneous hydrolysis and promotes its binding to the 30S ribosomal subunits. Also involved in the hydrolysis of GTP during the formation of the 70S ribosomal complex. This chain is Translation initiation factor IF-2, found in Burkholderia mallei (strain NCTC 10247).